The following is an 81-amino-acid chain: MSAAEIKDKVYDIIVSKMGVNKDQIKPESKFADDLGADSLDTVELIMELENEFGVQIPDEDAEKIGTVQQAIDYIVNKKVS.

The Carrier domain occupies 4 to 79; it reads AEIKDKVYDI…QAIDYIVNKK (76 aa). Residue S39 is modified to O-(pantetheine 4'-phosphoryl)serine.

Belongs to the acyl carrier protein (ACP) family. 4'-phosphopantetheine is transferred from CoA to a specific serine of apo-ACP by AcpS. This modification is essential for activity because fatty acids are bound in thioester linkage to the sulfhydryl of the prosthetic group.

It localises to the cytoplasm. Its pathway is lipid metabolism; fatty acid biosynthesis. Carrier of the growing fatty acid chain in fatty acid biosynthesis. This is Acyl carrier protein from Chlorobaculum tepidum (strain ATCC 49652 / DSM 12025 / NBRC 103806 / TLS) (Chlorobium tepidum).